The sequence spans 63 residues: Large ribosomal subunit protein uL29 (63 aa).

Belongs to the universal ribosomal protein uL29 family.

In Pseudomonas fluorescens (strain ATCC BAA-477 / NRRL B-23932 / Pf-5), this protein is Large ribosomal subunit protein uL29.